The primary structure comprises 777 residues: UPF0313 protein VP1980 (777 aa).

Residues 363–642 (AYDMIKTSVN…KALLRYHDPA (280 aa)) form the Radical SAM core domain. The [4Fe-4S] cluster site is built by Cys-377, Cys-381, and Cys-384. The segment at 675 to 777 (AQTPAQRRKS…PAGQRKPKRR (103 aa)) is disordered. Residues 680–698 (QRRKSGRHGANRFATKHTK) are compositionally biased toward basic residues. The span at 709–719 (KRAEGGSKDGK) shows a compositional bias: basic and acidic residues. A compositionally biased stretch (polar residues) spans 736–747 (PASNGQRPSGNG). Over residues 755 to 769 (KPQGQGRPQGQGKPA) the composition is skewed to low complexity.

The protein belongs to the UPF0313 family. It depends on [4Fe-4S] cluster as a cofactor.

In Vibrio parahaemolyticus serotype O3:K6 (strain RIMD 2210633), this protein is UPF0313 protein VP1980.